Consider the following 493-residue polypeptide: Glutamate--tRNA ligase (493 aa).

Positions 10-20 match the 'HIGH' region motif; the sequence is PSPTGDPHVGT. The 'KMSKS' region signature appears at 251–255; sequence KLSKR. K254 provides a ligand contact to ATP.

Belongs to the class-I aminoacyl-tRNA synthetase family. Glutamate--tRNA ligase type 1 subfamily. Monomer.

Its subcellular location is the cytoplasm. It catalyses the reaction tRNA(Glu) + L-glutamate + ATP = L-glutamyl-tRNA(Glu) + AMP + diphosphate. In terms of biological role, catalyzes the attachment of glutamate to tRNA(Glu) in a two-step reaction: glutamate is first activated by ATP to form Glu-AMP and then transferred to the acceptor end of tRNA(Glu). The protein is Glutamate--tRNA ligase of Pseudomonas putida (strain GB-1).